Consider the following 477-residue polypeptide: Probable cytosolic Fe-S cluster assembly factor CG17683 (477 aa).

8 residues coordinate [4Fe-4S] cluster: Cys23, Cys68, Cys71, Cys74, Cys187, Cys243, Cys395, and Cys399.

Belongs to the NARF family.

Component of the cytosolic iron-sulfur (Fe/S) protein assembly machinery. Required for maturation of extramitochondrial Fe/S proteins. This Drosophila melanogaster (Fruit fly) protein is Probable cytosolic Fe-S cluster assembly factor CG17683.